Reading from the N-terminus, the 100-residue chain is MAKKSMIERDKKRENLMNKYLVKRQQLKTRLNETDSVEEKLLLNQELQKLPRNSAPSRVRIRCWLTGRPRGNYRDFGVSRHVLREMAHQGLLPGVTKSSW.

Belongs to the universal ribosomal protein uS14 family. In terms of assembly, part of the 30S ribosomal subunit.

The protein resides in the plastid. It localises to the cyanelle. Binds 16S rRNA, required for the assembly of 30S particles. This is Small ribosomal subunit protein uS14c from Cyanophora paradoxa.